A 155-amino-acid chain; its full sequence is Putative pre-16S rRNA nuclease (155 aa).

The protein belongs to the YqgF nuclease family.

The protein resides in the cytoplasm. Could be a nuclease involved in processing of the 5'-end of pre-16S rRNA. This is Putative pre-16S rRNA nuclease from Wolbachia sp. subsp. Brugia malayi (strain TRS).